A 231-amino-acid chain; its full sequence is Chlorophyll a-b binding protein 1B-20, chloroplastic (231 aa).

The tract at residues arginine 1–arginine 25 is disordered. The N-terminal 31 residues, arginine 1–glutamine 31, are a transit peptide targeting the chloroplast. Tryptophan 36 provides a ligand contact to chlorophyll b. Phenylalanine 56 is a chlorophyll a binding site. The chlorophyll b site is built by arginine 80, serine 118, glutamate 133, and arginine 136. 6 residues coordinate chlorophyll a: lysine 182, glutamate 183, asparagine 186, arginine 188, glutamine 200, and histidine 215. The chain crosses the membrane as a helical span at residues glutamate 183–valine 199.

Belongs to the light-harvesting chlorophyll a/b-binding (LHC) protein family. As to quaternary structure, the LHC complex consists of chlorophyll a-b binding proteins. The cofactor is Binds at least 14 chlorophylls (8 Chl-a and 6 Chl-b) and carotenoids such as lutein and neoxanthin.. Photoregulated by reversible phosphorylation of its threonine residues.

Its subcellular location is the plastid. The protein localises to the chloroplast thylakoid membrane. Its function is as follows. The light-harvesting complex (LHC) functions as a light receptor, it captures and delivers excitation energy to photosystems with which it is closely associated. The chain is Chlorophyll a-b binding protein 1B-20, chloroplastic (LHC Ib-20) from Hordeum vulgare (Barley).